Consider the following 406-residue polypeptide: 8-amino-7-oxononanoate synthase (406 aa).

Arginine 21 is a binding site for substrate. 112-113 (GY) contacts pyridoxal 5'-phosphate. Substrate is bound at residue histidine 137. Residues serine 183, histidine 211, and threonine 239 each coordinate pyridoxal 5'-phosphate. An N6-(pyridoxal phosphate)lysine modification is found at lysine 242. Threonine 358 is a binding site for substrate.

The protein belongs to the class-II pyridoxal-phosphate-dependent aminotransferase family. BioF subfamily. As to quaternary structure, homodimer. The cofactor is pyridoxal 5'-phosphate.

The enzyme catalyses 6-carboxyhexanoyl-[ACP] + L-alanine + H(+) = (8S)-8-amino-7-oxononanoate + holo-[ACP] + CO2. Its pathway is cofactor biosynthesis; biotin biosynthesis. Functionally, catalyzes the decarboxylative condensation of pimeloyl-[acyl-carrier protein] and L-alanine to produce 8-amino-7-oxononanoate (AON), [acyl-carrier protein], and carbon dioxide. This is 8-amino-7-oxononanoate synthase from Burkholderia cenocepacia (strain HI2424).